Here is a 126-residue protein sequence, read N- to C-terminus: Holo-[acyl-carrier-protein] synthase (126 aa).

Mg(2+) is bound by residues Asp8 and Glu57.

It belongs to the P-Pant transferase superfamily. AcpS family. Mg(2+) serves as cofactor.

The protein localises to the cytoplasm. It catalyses the reaction apo-[ACP] + CoA = holo-[ACP] + adenosine 3',5'-bisphosphate + H(+). Transfers the 4'-phosphopantetheine moiety from coenzyme A to a Ser of acyl-carrier-protein. The polypeptide is Holo-[acyl-carrier-protein] synthase (Vibrio cholerae serotype O1 (strain ATCC 39315 / El Tor Inaba N16961)).